The sequence spans 124 residues: Urease subunit beta (124 aa).

The protein belongs to the urease beta subunit family. As to quaternary structure, heterotrimer of UreA (gamma), UreB (beta) and UreC (alpha) subunits. Three heterotrimers associate to form the active enzyme.

It localises to the cytoplasm. It carries out the reaction urea + 2 H2O + H(+) = hydrogencarbonate + 2 NH4(+). It functions in the pathway nitrogen metabolism; urea degradation; CO(2) and NH(3) from urea (urease route): step 1/1. The sequence is that of Urease subunit beta from Bacillus subtilis (strain 168).